The chain runs to 242 residues: Immunity protein TsiV2 (242 aa).

3 helical membrane-spanning segments follow: residues 39–59 (VFGA…FADI), 66–86 (FWGF…LFMP), and 118–138 (FAWV…PLAF).

It is found in the host membrane. In terms of biological role, immunity protein that plays a role in preventing early activation of toxin VasX. This Vibrio cholerae serotype O1 (strain ATCC 39315 / El Tor Inaba N16961) protein is Immunity protein TsiV2.